The sequence spans 1146 residues: MDSSSTTPLADYFWIAGIETIAYDDPLPSGSQVAASIAEDGEQQPEENGVNANGTGAPRHHARHSRQNSANRLSNSRFSIHTLDEIDGNTQSNRSSVTIRPAHAQGNGLPNEGVGPAPGIGLLDGFDFDDALVKFAAERENFLDDLTFSAGAKLQARPPMVNPRAERIKAEDSDQSGRRSPLRNLERSIKGSIRRKMSFRDMNSSRRQPVTPRASTPGAGAIPRQGSIRTTRRLSNYNSVIPPPEPLNTDPNMHPLKRRFEPVLLDRYPAKDVPEETARRGKFPDYVPMFAFPNDIQIVSSDDRPRSTWHGFTMTSDDNSKIYGITIIIWTALTSDVAEELEKRCEQWRQRHMSNEERELAASLGVRLAAERANLSSLLARLPSVPSGSSARDALDDQISTVEEKISLMTEMLRPLRHGAASKIDGLTAGESGLWSPRAYGILGRDVTRMAFWKDWLRAVLVPMTDGGVLRIPPSSPKVGRWQPLERYVVNLCTEAFSPLGSKTQVELGVRELKLYARQDAVNEIPGSRTIDIYALFRCLSLDNIVALFEYAMSESRIIFLSSHTGMLHLACHALVNLLYPLKWASIFIPVLPARLLSALEAPCPYIVGVERRYERIELPEDDYVLVDLDKDTIDATSQPVRLPRQHRRKLHALLQVAAPAKLRYGVATGPPPYAMESFPYDAFSAENPSLYNDYASPSTLAQWVAQNSSTFGEPSPASEVKPPIFNAFLHSKVDPNKPDRPGTSKSTRTSPPSSVSPVSINFPPMPTTPVSRSDSGFALTSTLREKRSRNFDEKTRRSSSFGVDKHGPLHRPSIPFLNGNGHAPSMSISAISVDSQPYTHSSYGGGYAPSTYAQSTLAASTIMPNMLIQPVFNTETTVWVEGHCFNWEEGALSSSCSVCDDRAEGDGIYKCSGCSAFAHGRCLGCVSLACHQSFYPDRVRAAFVRCLASLLYTYRKHLGRPSKDQKNNGRMYAFDMDGFIKSLPYDQQEYANMMRETQAFNEFIHERETKPGTTASIRFFDEVIMAKKARGRPGIVSGLSRLSTIRSSHGASSNSSAFSPPSRLKIPTYLSDTSDHMWRTASVPVPSAKFPGDYRSIVTRIPARLDTSLMREPRVIQGVPRPEQRGTRGLVRKQVPSMLGTSPTN.

2 disordered regions span residues 25-75 (DPLP…RLSN) and 156-226 (ARPP…PRQG). Positions 164–177 (RAERIKAEDSDQSG) are enriched in basic and acidic residues. The 255-residue stretch at 246–500 (PLNTDPNMHP…NLCTEAFSPL (255 aa)) folds into the uDENN domain. The region spanning 522–656 (VNEIPGSRTI…HRRKLHALLQ (135 aa)) is the cDENN domain. Residues 658–1016 (AAPAKLRYGV…ERETKPGTTA (359 aa)) form the dDENN domain. A disordered region spans residues 730 to 806 (LHSKVDPNKP…RRSSSFGVDK (77 aa)). Residues 732–743 (SKVDPNKPDRPG) show a composition bias toward basic and acidic residues. Over residues 744–760 (TSKSTRTSPPSSVSPVS) the composition is skewed to low complexity. Positions 769 to 783 (TPVSRSDSGFALTST) are enriched in polar residues. The span at 784–797 (LREKRSRNFDEKTR) shows a compositional bias: basic and acidic residues. A Phorbol-ester/DAG-type zinc finger spans residues 883-931 (GHCFNWEEGALSSSCSVCDDRAEGDGIYKCSGCSAFAHGRCLGCVSLAC). Residues 1121-1146 (PRPEQRGTRGLVRKQVPSMLGTSPTN) are disordered.

Belongs to the EPD1 elicitor family. In terms of assembly, interacts with host cotton EIR5A (AC A0A5J5T2N2) and EIR5D (AC A0A5J5NT52) and host N.benthamiana EIR (AC P0DXJ0).

Its subcellular location is the secreted. The protein resides in the host cell. Its function is as follows. Acts as an elicitor that triggers defense responses in both Nicotiana benthamiana and cotton plants. Triggers the accumulation of reactive oxygen species (ROS) and the activation of cell death in cotton plants. Induces significantly enhanced resistance of Nicotiana benthamiana to both the broad-host-range filamentous pathogen Botrytis cinerea and the semibiotrophic pathogen Phytophthora capsici. Stimulates the expression of EIR5A (AC A0A5J5T2N2) and EIR5D (AC A0A5J5NT52) in cotton plants and recognition of EPD1 potentiates EIRs to enhance cotton PAMP-triggered immunity (PTI). In Verticillium dahliae (strain VdLs.17 / ATCC MYA-4575 / FGSC 10137) (Verticillium wilt), this protein is Elicitor of plant defense protein 1.